Here is a 385-residue protein sequence, read N- to C-terminus: Probable caffeine synthase 3 (385 aa).

Y18, C62, N67, D101, L102, S140, and F141 together coordinate S-adenosyl-L-homocysteine. Caffeine-binding residues include Y158, Q161, and F162. Position 179 (N179) interacts with Mg(2+). T238 is a binding site for caffeine. D261, F263, and N264 together coordinate Mg(2+). Y369 contributes to the caffeine binding site.

The protein belongs to the methyltransferase superfamily. Type-7 methyltransferase family. Mg(2+) serves as cofactor. In terms of tissue distribution, expressed in roots, stems, young and old leaves.

The protein operates within alkaloid biosynthesis. Its function is as follows. May be involved in the biosynthesis of caffeine. In Coffea arabica (Arabian coffee), this protein is Probable caffeine synthase 3.